Reading from the N-terminus, the 515-residue chain is Histidine ammonia-lyase (515 aa).

The segment at residues 142 to 144 (ASG) is a cross-link (5-imidazolinone (Ala-Gly)). The residue at position 143 (serine 143) is a 2,3-didehydroalanine (Ser).

It belongs to the PAL/histidase family. Contains an active site 4-methylidene-imidazol-5-one (MIO), which is formed autocatalytically by cyclization and dehydration of residues Ala-Ser-Gly.

Its subcellular location is the cytoplasm. It carries out the reaction L-histidine = trans-urocanate + NH4(+). It functions in the pathway amino-acid degradation; L-histidine degradation into L-glutamate; N-formimidoyl-L-glutamate from L-histidine: step 1/3. The polypeptide is Histidine ammonia-lyase (Bradyrhizobium sp. (strain BTAi1 / ATCC BAA-1182)).